Here is a 273-residue protein sequence, read N- to C-terminus: 4-hydroxy-tetrahydrodipicolinate reductase (273 aa).

Residues glycine 12–methionine 17 and glutamate 38 contribute to the NAD(+) site. Arginine 39 provides a ligand contact to NADP(+). NAD(+) is bound by residues glycine 102–threonine 104 and alanine 126–phenylalanine 129. Residue histidine 159 is the Proton donor/acceptor of the active site. Histidine 160 provides a ligand contact to (S)-2,3,4,5-tetrahydrodipicolinate. Lysine 163 acts as the Proton donor in catalysis. Position 169 to 170 (glycine 169 to threonine 170) interacts with (S)-2,3,4,5-tetrahydrodipicolinate.

It belongs to the DapB family. In terms of assembly, homotetramer.

The protein resides in the cytoplasm. It carries out the reaction (S)-2,3,4,5-tetrahydrodipicolinate + NAD(+) + H2O = (2S,4S)-4-hydroxy-2,3,4,5-tetrahydrodipicolinate + NADH + H(+). The enzyme catalyses (S)-2,3,4,5-tetrahydrodipicolinate + NADP(+) + H2O = (2S,4S)-4-hydroxy-2,3,4,5-tetrahydrodipicolinate + NADPH + H(+). It participates in amino-acid biosynthesis; L-lysine biosynthesis via DAP pathway; (S)-tetrahydrodipicolinate from L-aspartate: step 4/4. Its function is as follows. Catalyzes the conversion of 4-hydroxy-tetrahydrodipicolinate (HTPA) to tetrahydrodipicolinate. The polypeptide is 4-hydroxy-tetrahydrodipicolinate reductase (Klebsiella pneumoniae subsp. pneumoniae (strain ATCC 700721 / MGH 78578)).